Reading from the N-terminus, the 385-residue chain is 8-amino-7-oxononanoate synthase (385 aa).

Arg21 is a binding site for substrate. 108–109 (GF) contributes to the pyridoxal 5'-phosphate binding site. A substrate-binding site is contributed by His133. Pyridoxal 5'-phosphate is bound by residues Ser179, His207, and Thr233. Lys236 is subject to N6-(pyridoxal phosphate)lysine. Substrate is bound at residue Thr352.

This sequence belongs to the class-II pyridoxal-phosphate-dependent aminotransferase family. BioF subfamily. As to quaternary structure, homodimer. Requires pyridoxal 5'-phosphate as cofactor.

The enzyme catalyses 6-carboxyhexanoyl-[ACP] + L-alanine + H(+) = (8S)-8-amino-7-oxononanoate + holo-[ACP] + CO2. It participates in cofactor biosynthesis; biotin biosynthesis. Functionally, catalyzes the decarboxylative condensation of pimeloyl-[acyl-carrier protein] and L-alanine to produce 8-amino-7-oxononanoate (AON), [acyl-carrier protein], and carbon dioxide. The sequence is that of 8-amino-7-oxononanoate synthase from Salmonella agona (strain SL483).